The primary structure comprises 133 residues: Large-conductance mechanosensitive channel (133 aa).

Helical transmembrane passes span 10-30 (FAMR…GAFG) and 76-96 (GAFI…FLMI).

The protein belongs to the MscL family. As to quaternary structure, homopentamer.

It is found in the cell inner membrane. Functionally, channel that opens in response to stretch forces in the membrane lipid bilayer. May participate in the regulation of osmotic pressure changes within the cell. The protein is Large-conductance mechanosensitive channel of Pasteurella multocida (strain Pm70).